A 186-amino-acid polypeptide reads, in one-letter code: Cysteine protease inhibitor 10 (186 aa).

Residues 1–7 (TCHDDDN) form the signal peptide. Disulfide bonds link Cys49/Cys101 and Cys149/Cys155.

Belongs to the protease inhibitor I3 (leguminous Kunitz-type inhibitor) family.

It is found in the vacuole. Its function is as follows. Probable inhibitor of cysteine proteases. May protect the plant by inhibiting proteases of invading organisms. This chain is Cysteine protease inhibitor 10, found in Solanum tuberosum (Potato).